The primary structure comprises 473 residues: Photosystem II CP43 reaction center protein (473 aa).

The propeptide occupies 1 to 14 (MKTLYSLRRFYPVE). Position 15 is an N-acetylthreonine (T15). The residue at position 15 (T15) is a Phosphothreonine. 5 helical membrane-spanning segments follow: residues 69–93 (LFEV…PHLA), 134–155 (LLGP…KDRN), 178–200 (KALY…RKIT), 255–275 (KPFA…LSYS), and 291–312 (WFNN…ASQA). Residue E367 coordinates [CaMn4O5] cluster. The chain crosses the membrane as a helical span at residues 447–471 (RARAAAAGFEKGIDRDFEPVLSMTP).

The protein belongs to the PsbB/PsbC family. PsbC subfamily. In terms of assembly, PSII is composed of 1 copy each of membrane proteins PsbA, PsbB, PsbC, PsbD, PsbE, PsbF, PsbH, PsbI, PsbJ, PsbK, PsbL, PsbM, PsbT, PsbX, PsbY, PsbZ, Psb30/Ycf12, at least 3 peripheral proteins of the oxygen-evolving complex and a large number of cofactors. It forms dimeric complexes. The cofactor is Binds multiple chlorophylls and provides some of the ligands for the Ca-4Mn-5O cluster of the oxygen-evolving complex. It may also provide a ligand for a Cl- that is required for oxygen evolution. PSII binds additional chlorophylls, carotenoids and specific lipids..

The protein localises to the plastid. It is found in the chloroplast thylakoid membrane. In terms of biological role, one of the components of the core complex of photosystem II (PSII). It binds chlorophyll and helps catalyze the primary light-induced photochemical processes of PSII. PSII is a light-driven water:plastoquinone oxidoreductase, using light energy to abstract electrons from H(2)O, generating O(2) and a proton gradient subsequently used for ATP formation. This is Photosystem II CP43 reaction center protein from Populus trichocarpa (Western balsam poplar).